Consider the following 124-residue polypeptide: Probable cytochrome b5 1 (124 aa).

One can recognise a Cytochrome b5 heme-binding domain in the interval 3-79; that stretch reads VKYFEPEEIV…LEEMYIGDLK (77 aa). Heme is bound by residues H38 and H62. Residues 100–120 form a helical membrane-spanning segment; sequence PPLPLLIALIVLPAIAVIVFV.

It belongs to the cytochrome b5 family.

Its subcellular location is the endoplasmic reticulum membrane. It localises to the microsome membrane. In terms of biological role, membrane bound hemoprotein which function as an electron carrier for several membrane bound oxygenases. The sequence is that of Probable cytochrome b5 1 from Schizosaccharomyces pombe (strain 972 / ATCC 24843) (Fission yeast).